Reading from the N-terminus, the 943-residue chain is MSSKEHSPEKPWRGFYGPNLGAVIELYDQYVEDPNSVDEQTRAHFEKWGPPALEENVSSSNAKETIGADMISAVVGAVRLADYIRAKGHLVSDIQPIWKTDKNSNLLDYDRFNVTEEELKKVPVKLICKDAPPHLKNGLEAIEHLKKVYTQTMAFEFGHVQDEEERNWLRKQVESEAYADELPNKEKKALLERLTSVEGFEKFIHRTFVGQKRFSIEGLDTLVPMLDKAIREVRKEKTDHVMIGMAHRGRLNVLAHTLGKPYKAIFSEFLQAPNKLNAPSEGLGETYTGWTGDVKYHLGADRQISDDKSAQTIVSLANNPSHLEFVSPIVEGYARAAQEDRSSKGAPKQDTTRAYSILIHGDAAFPGQGVVTETLNLSRLNGYHVGGSLHIIANNNIGYTTEMHDSRSTTYASDPAKGFEIPIVHVNADDAEACVRAIKFAVEYRRKFQKDFLIDLIGYRRFGHNEGDEPAVTQPDLYAQIRKHPTVRAIYAKQLEAEQVITAKEAQKLDTDMYNYLLEEYNKVNSDKSEKKYELSPPDFIVDGLPKVKTAVEKEKLVAMNEQLLDWPSSFKPNQKLEKILKRRANAFDGEGNVDWGLAEILAFASILHDGTPVRLSGQDSERGTFAHRHFVLHDRETNETHVPLQTIKDANASFAVYNSPLTEQACVGFEYGYNVFSKETLVLWEAQFGDFVNGAQVMFDQWVSAGRAKWGQKSGLVVLLPHGYEGAGPEHSSGRVERFLSSAAENNWTVANCTSAAQYFHILRRQAKILQKNTVRPLIIMTPKSLLRNQVVASPTSAFTEGEFQPILEEPTLGHDPNAVKRIILCSGKLAIELQDYVNKNDEDWSWVHIIRVEELYPFPRRAIRERLKEFPNLEEVKWVQEEPKNMGAWTFMEPRIREILPSGVPLSYIGRTYRSSPAEGVSNAHKVEQKRIVTESLTRKN.

It belongs to the alpha-ketoglutarate dehydrogenase family. In terms of assembly, homodimer. Part of the 2-oxoglutarate dehydrogenase (OGDH) complex composed of E1 (2-oxoglutarate dehydrogenase), E2 (dihydrolipoamide succinyltransferase) and E3 (dihydrolipoamide dehydrogenase); the complex contains multiple copies of the three enzymatic components (E1, E2 and E3). Thiamine diphosphate serves as cofactor.

The enzyme catalyses N(6)-[(R)-lipoyl]-L-lysyl-[protein] + 2-oxoglutarate + H(+) = N(6)-[(R)-S(8)-succinyldihydrolipoyl]-L-lysyl-[protein] + CO2. Functionally, E1 component of the 2-oxoglutarate dehydrogenase (OGDH) complex which catalyzes the decarboxylation of 2-oxoglutarate, the first step in the conversion of 2-oxoglutarate to succinyl-CoA and CO(2). This Shouchella clausii (strain KSM-K16) (Alkalihalobacillus clausii) protein is 2-oxoglutarate dehydrogenase E1 component.